A 329-amino-acid chain; its full sequence is tRNA-modifying protein YgfZ (329 aa).

Positions 28 and 188 each coordinate folate.

This sequence belongs to the tRNA-modifying YgfZ family.

It is found in the cytoplasm. Functionally, folate-binding protein involved in regulating the level of ATP-DnaA and in the modification of some tRNAs. It is probably a key factor in regulatory networks that act via tRNA modification, such as initiation of chromosomal replication. This is tRNA-modifying protein YgfZ from Photorhabdus laumondii subsp. laumondii (strain DSM 15139 / CIP 105565 / TT01) (Photorhabdus luminescens subsp. laumondii).